Reading from the N-terminus, the 520-residue chain is UBX domain-containing protein 11 (520 aa).

The interval 1 to 26 is disordered; it reads MSSPLASLSKTRKVPLPSEPMNPGRR. A coiled-coil region spans residues 76–149; sequence MAFMTRKLWD…VREMERFLSD (74 aa). An SEP domain is found at 230-294; it reads LEPIPLKLYR…VSDLRNQVYL (65 aa). Residues 392-469 form the UBX domain; the sequence is PAPPLSMLRI…GLVPKAALLL (78 aa). The tract at residues 476–520 is disordered; it reads KSSLKFSPGPCPGPGPGPSPGPGPGPSPGPGPGPSPCPGPSPSPQ. Pro residues predominate over residues 484 to 520; that stretch reads GPCPGPGPGPSPGPGPGPSPGPGPGPSPCPGPSPSPQ. 3 repeat units span residues 487 to 494, 495 to 502, and 503 to 510. Residues 487-510 form a 3 X 8 AA tandem repeats of P-G-P-G-P-G-P-S region; it reads PGPGPGPSPGPGPGPSPGPGPGPS.

As to quaternary structure, interacts with GNA12, GNA13, RND1, RND2 and RND3.

Its subcellular location is the cytoplasm. It localises to the cytoskeleton. May be involved in the reorganization of actin cytoskeleton mediated by RND1, RND2 and RND3. Promotes RHOA activation mediated by GNA12 and GNA13. This is UBX domain-containing protein 11 (UBXN11) from Homo sapiens (Human).